The primary structure comprises 650 residues: Secretin OutD (650 aa).

An N-terminal signal peptide occupies residues 1–18 (MLLLSGSVLLMASSLAWS). Residues 20-115 (EFSASFKGTD…LATDRQPGIG (96 aa)) form an N0 region. Positions 117 to 181 (EVVTRVVPVN…TIVERVDQTG (65 aa)) are N1. The tract at residues 182-255 (DRNVTTIPLS…MVKQLDRQQA (74 aa)) is N2. Residues 258 to 330 (GNTKVIYLKY…DLEQVIAQLD (73 aa)) are N3. The segment at 335–585 (QVLVEAIIAE…LFIRPSIIRD (251 aa)) is secretin. The tract at residues 587–650 (SQFQSASASK…IVAFYPAGGK (64 aa)) is s domain.

This sequence belongs to the bacterial secretin family. GSP D subfamily. In terms of assembly, forms a cylindrical channel with 15 subunits.

It localises to the cell outer membrane. Involved in a type II secretion system (T2SS, formerly general secretion pathway, GSP) for the export of proteins. Required for the translocation of the multiple pectic enzymes. This subunit forms the outer membrane channel. The polypeptide is Secretin OutD (outD) (Pectobacterium carotovorum subsp. carotovorum (Erwinia carotovora subsp. carotovora)).